Consider the following 275-residue polypeptide: Chlorobenzene dihydrodiol dehydrogenase (275 aa).

Tyr155 serves as the catalytic Proton acceptor.

It belongs to the short-chain dehydrogenases/reductases (SDR) family.

It carries out the reaction (1R,2R)-3-chlorocyclohexa-3,5-diene-1,2-diol + NAD(+) = 3-chlorocatechol + NADH + H(+). The protein operates within aromatic compound metabolism. Its function is as follows. Can transform various dihydrodiols of chlorobenzenes and chlorotoluenes into the respective catechols. This Cupriavidus sp. (strain PS12) protein is Chlorobenzene dihydrodiol dehydrogenase.